The primary structure comprises 287 residues: 4-hydroxybenzoate octaprenyltransferase (287 aa).

6 helical membrane-spanning segments follow: residues 41–61, 89–109, 133–153, 158–178, 218–238, and 267–287; these read WPLIVIFALGTLLMRSAGCAM, WEAVAIAVGLSFVAFLLILPL, FFAIPQAYLGIAFGFGIPMAF, NTVPPLAWVMLIANVFWSIAY, LGIYVWIGIALGFGAAYWVGW, and NNWLGGVLFAGIAAHYLMAGS.

It belongs to the UbiA prenyltransferase family. The cofactor is Mg(2+).

The protein resides in the cell inner membrane. The enzyme catalyses all-trans-octaprenyl diphosphate + 4-hydroxybenzoate = 4-hydroxy-3-(all-trans-octaprenyl)benzoate + diphosphate. It participates in cofactor biosynthesis; ubiquinone biosynthesis. Catalyzes the prenylation of para-hydroxybenzoate (PHB) with an all-trans polyprenyl group. Mediates the second step in the final reaction sequence of ubiquinone-8 (UQ-8) biosynthesis, which is the condensation of the polyisoprenoid side chain with PHB, generating the first membrane-bound Q intermediate 3-octaprenyl-4-hydroxybenzoate. The protein is 4-hydroxybenzoate octaprenyltransferase of Burkholderia multivorans (strain ATCC 17616 / 249).